Reading from the N-terminus, the 67-residue chain is Large ribosomal subunit protein uL30 (67 aa).

Belongs to the universal ribosomal protein uL30 family. Part of the 50S ribosomal subunit.

This chain is Large ribosomal subunit protein uL30, found in Sorangium cellulosum (strain So ce56) (Polyangium cellulosum (strain So ce56)).